The sequence spans 129 residues: Large ribosomal subunit protein uL22 (129 aa).

The protein belongs to the universal ribosomal protein uL22 family. In terms of assembly, part of the 50S ribosomal subunit.

This protein binds specifically to 23S rRNA; its binding is stimulated by other ribosomal proteins, e.g. L4, L17, and L20. It is important during the early stages of 50S assembly. It makes multiple contacts with different domains of the 23S rRNA in the assembled 50S subunit and ribosome. Functionally, the globular domain of the protein is located near the polypeptide exit tunnel on the outside of the subunit, while an extended beta-hairpin is found that lines the wall of the exit tunnel in the center of the 70S ribosome. The chain is Large ribosomal subunit protein uL22 from Mesorhizobium japonicum (strain LMG 29417 / CECT 9101 / MAFF 303099) (Mesorhizobium loti (strain MAFF 303099)).